Here is a 367-residue protein sequence, read N- to C-terminus: Avirulence protein ATR5 (367 aa).

The N-terminal stretch at 1 to 16 (MRLISPALVVSTAIQA) is a signal peptide. An N-linked (GlcNAc...) asparagine glycan is attached at N20. The disordered stretch occupies residues 33–65 (NPLASAHPPDVGYDGVPAGRVRNPDDPTTEERT). The span at 54–65 (RNPDDPTTEERT) shows a compositional bias: basic and acidic residues. The dEER motif lies at 61 to 64 (TEER).

It belongs to the RxLR effector family.

Its subcellular location is the secreted. The protein localises to the host cell. Secreted effector that acts as an elicitor of hypersensitive response (HR) specifically on plants carrying defense protein RPP5. The sequence is that of Avirulence protein ATR5 from Hyaloperonospora arabidopsidis (strain Emoy2) (Downy mildew agent).